A 433-amino-acid chain; its full sequence is UDP-N-acetylglucosamine 1-carboxyvinyltransferase (433 aa).

34–35 serves as a coordination point for phosphoenolpyruvate; it reads KN. UDP-N-acetyl-alpha-D-glucosamine is bound at residue arginine 104. Residue cysteine 128 is the Proton donor of the active site. At cysteine 128 the chain carries 2-(S-cysteinyl)pyruvic acid O-phosphothioketal. UDP-N-acetyl-alpha-D-glucosamine-binding residues include aspartate 320 and isoleucine 342.

Belongs to the EPSP synthase family. MurA subfamily.

The protein resides in the cytoplasm. The enzyme catalyses phosphoenolpyruvate + UDP-N-acetyl-alpha-D-glucosamine = UDP-N-acetyl-3-O-(1-carboxyvinyl)-alpha-D-glucosamine + phosphate. Its pathway is cell wall biogenesis; peptidoglycan biosynthesis. In terms of biological role, cell wall formation. Adds enolpyruvyl to UDP-N-acetylglucosamine. The polypeptide is UDP-N-acetylglucosamine 1-carboxyvinyltransferase (Synechococcus sp. (strain CC9605)).